The sequence spans 338 residues: Ketol-acid reductoisomerase (NADP(+)) (338 aa).

A KARI N-terminal Rossmann domain is found at 1-181 (MQVYYDKDCD…GGGRTGIIET (181 aa)). NADP(+) is bound by residues 24–27 (FGSQ), Arg47, Ser50, Ser52, and 82–85 (DEFQ). His107 is an active-site residue. Gly133 contacts NADP(+). The 146-residue stretch at 182–327 (TFKDETETDL…EKLRSMMPWI (146 aa)) folds into the KARI C-terminal knotted domain. Mg(2+)-binding residues include Asp190, Glu194, Glu226, and Glu230. Ser251 contributes to the substrate binding site.

This sequence belongs to the ketol-acid reductoisomerase family. Mg(2+) serves as cofactor.

The catalysed reaction is (2R)-2,3-dihydroxy-3-methylbutanoate + NADP(+) = (2S)-2-acetolactate + NADPH + H(+). The enzyme catalyses (2R,3R)-2,3-dihydroxy-3-methylpentanoate + NADP(+) = (S)-2-ethyl-2-hydroxy-3-oxobutanoate + NADPH + H(+). The protein operates within amino-acid biosynthesis; L-isoleucine biosynthesis; L-isoleucine from 2-oxobutanoate: step 2/4. Its pathway is amino-acid biosynthesis; L-valine biosynthesis; L-valine from pyruvate: step 2/4. Involved in the biosynthesis of branched-chain amino acids (BCAA). Catalyzes an alkyl-migration followed by a ketol-acid reduction of (S)-2-acetolactate (S2AL) to yield (R)-2,3-dihydroxy-isovalerate. In the isomerase reaction, S2AL is rearranged via a Mg-dependent methyl migration to produce 3-hydroxy-3-methyl-2-ketobutyrate (HMKB). In the reductase reaction, this 2-ketoacid undergoes a metal-dependent reduction by NADPH to yield (R)-2,3-dihydroxy-isovalerate. This chain is Ketol-acid reductoisomerase (NADP(+)), found in Marinobacter nauticus (strain ATCC 700491 / DSM 11845 / VT8) (Marinobacter aquaeolei).